Reading from the N-terminus, the 639-residue chain is MNLEKLSKPELLTLFSILEGELEARDLVIEALKAQHRDTFIEERYGKYNISDPLMALQRDFETLKEKNDGEKQPVCTNPLSILKVVMKQCKNMQERMLSQLAAAESRHRKVILDLEEERQRHAQDTAEGDDVTYMLEKERERLTQQLEFEKSQVKKFEKEQKKLSSQLEEERSRHKQLSSMLVLECKKATNKAAEEGQKAGELSLKLEKEKSRVSKLEEELAAERKRGLQTEAQVEKQLSEFDIEREQLRAKLNREENRTKTLKEEMESLKKIVKDLEASHQHSSPNEQLKKPVTVSKGTATEPLMLMSVFCQTESFPAERTHGSNIAKMTNTGLPGPATPAYSYAKTNGHCDPEIQTTRELTAGNNVENQVPPREKSVALAQEKPVENGGCPVGIETPVPMPSPLPSSGSSLSPSSTASSSLTSSPCSSPVLTKRLLGSSASSPGYQSSYQVGINQRFHAARHKFQSQADQDQQASGLQSPPSRDLSPTLIDNSAAKQLARNTVTQVLSRFTSQQGPIKPVSPNSSPFGTDYRNLANTANPRGDTSHSPTPGKVSSPLSPLSPGIKSPTIPRAERGNPPPIPPKKPGLTPSPSATTPLTKTHSQAASLTTAEDLASSCSSNTVVANGKDVELLLPTSS.

Residues 87–285 are a coiled coil; sequence MKQCKNMQER…DLEASHQHSS (199 aa). Ser-284 and Ser-285 each carry phosphoserine. 3 disordered regions span residues 387–430, 463–490, and 511–609; these read VENG…PCSS, RHKF…LSPT, and RFTS…AASL. Composition is skewed to low complexity over residues 407-430 and 467-477; these read PSSG…PCSS and QSQADQDQQAS. 7 positions are modified to phosphoserine: Ser-481, Ser-488, Ser-523, Ser-527, Ser-560, Ser-563, and Ser-568. The segment covering 511-529 has biased composition (polar residues); it reads RFTSQQGPIKPVSPNSSPF. A phosphothreonine mark is found at Thr-570 and Thr-590. Over residues 587 to 600 the composition is skewed to low complexity; that stretch reads PGLTPSPSATTPLT. Residue Ser-592 is modified to Phosphoserine.

In terms of assembly, interacts with CTTN/cortactin; this interaction may redistribute CTTN to stress fibers. May form homomers. Associates with the core of STRIPAK complexes composed of PP2A catalytic and scaffolding subunits, the striatins (PP2A regulatory subunits), the striatin-associated proteins MOB4, STRIP1 and STRIP2, PDCD10 and members of the STE20 kinases, such as STK24 and STK26.

Its subcellular location is the cell projection. It localises to the lamellipodium. The protein localises to the cytoplasm. The protein resides in the cytoskeleton. It is found in the stress fiber. Its function is as follows. Regulates lamellipodial actin dynamics in a CTTN-dependent manner. Associates with core striatin-interacting phosphatase and kinase (STRIPAK) complex to form CTTNBP2NL-STRIPAK complexes. STRIPAK complexes have critical roles in protein (de)phosphorylation and are regulators of multiple signaling pathways including Hippo, MAPK, nuclear receptor and cytoskeleton remodeling. Different types of STRIPAK complexes are involved in a variety of biological processes such as cell growth, differentiation, apoptosis, metabolism and immune regulation. The protein is CTTNBP2 N-terminal-like protein (CTTNBP2NL) of Pongo abelii (Sumatran orangutan).